A 525-amino-acid polypeptide reads, in one-letter code: Peptide chain release factor 3 (525 aa).

The 268-residue stretch at 9–276 folds into the tr-type G domain; sequence AKRRTFAIIS…GFTRYAPAPQ (268 aa). Residues 18-25, 86-90, and 140-143 contribute to the GTP site; these read SHPDAGKT, DTPGH, and NKFD.

Belongs to the TRAFAC class translation factor GTPase superfamily. Classic translation factor GTPase family. PrfC subfamily.

The protein localises to the cytoplasm. Increases the formation of ribosomal termination complexes and stimulates activities of RF-1 and RF-2. It binds guanine nucleotides and has strong preference for UGA stop codons. It may interact directly with the ribosome. The stimulation of RF-1 and RF-2 is significantly reduced by GTP and GDP, but not by GMP. This chain is Peptide chain release factor 3, found in Francisella tularensis subsp. holarctica (strain FTNF002-00 / FTA).